A 211-amino-acid chain; its full sequence is Small ribosomal subunit protein eS1 (211 aa).

Residues 192-211 (NGLPPYEAVGDRATPELASY) form a disordered region.

The protein belongs to the eukaryotic ribosomal protein eS1 family.

The chain is Small ribosomal subunit protein eS1 from Methanopyrus kandleri (strain AV19 / DSM 6324 / JCM 9639 / NBRC 100938).